The chain runs to 972 residues: Isoleucine--tRNA ligase (972 aa).

The 'HIGH' region motif lies at 63–73; that stretch reads PYANGNIHIGH. Glu603 is an L-isoleucyl-5'-AMP binding site. Residues 644-648 carry the 'KMSKS' region motif; the sequence is KMSKS. Residue Lys647 coordinates ATP.

The protein belongs to the class-I aminoacyl-tRNA synthetase family. IleS type 1 subfamily. In terms of assembly, monomer.

It is found in the cytoplasm. The enzyme catalyses tRNA(Ile) + L-isoleucine + ATP = L-isoleucyl-tRNA(Ile) + AMP + diphosphate. Its function is as follows. Catalyzes the attachment of isoleucine to tRNA(Ile). As IleRS can inadvertently accommodate and process structurally similar amino acids such as valine, to avoid such errors it has two additional distinct tRNA(Ile)-dependent editing activities. One activity is designated as 'pretransfer' editing and involves the hydrolysis of activated Val-AMP. The other activity is designated 'posttransfer' editing and involves deacylation of mischarged Val-tRNA(Ile). The protein is Isoleucine--tRNA ligase of Brucella abortus (strain 2308).